A 617-amino-acid polypeptide reads, in one-letter code: RNA polymerase sigma factor RpoD (617 aa).

Positions 170 to 220 (PDDGSLPAEEVEPVNLKDDSADSKEKDDEEEESDDSSDSDDEGDGGPDPEE) are disordered. Basic and acidic residues predominate over residues 184–195 (NLKDDSADSKEK). Acidic residues predominate over residues 196–218 (DDEEEESDDSSDSDDEGDGGPDP). The interval 383 to 453 (MVEANLRLVI…TRSIADQART (71 aa)) is sigma-70 factor domain-2. Positions 407 to 410 (DLIQ) match the Interaction with polymerase core subunit RpoC motif. Residues 462–538 (ETINKLNRIS…DSTMQSPIEM (77 aa)) form a sigma-70 factor domain-3 region. A sigma-70 factor domain-4 region spans residues 551 to 604 (VLAGLTAREAKVLRMRFGIDMNTDHTLEEVGKQFDVTRERIRQIEAKALRKLRH). The segment at residues 577–596 (LEEVGKQFDVTRERIRQIEA) is a DNA-binding region (H-T-H motif).

The protein belongs to the sigma-70 factor family. RpoD/SigA subfamily. In terms of assembly, interacts transiently with the RNA polymerase catalytic core.

It localises to the cytoplasm. Sigma factors are initiation factors that promote the attachment of RNA polymerase to specific initiation sites and are then released. This sigma factor is the primary sigma factor during exponential growth. This is RNA polymerase sigma factor RpoD from Pseudomonas aeruginosa (strain ATCC 15692 / DSM 22644 / CIP 104116 / JCM 14847 / LMG 12228 / 1C / PRS 101 / PAO1).